The primary structure comprises 124 residues: Probable S-adenosyl-L-methionine-binding protein VNG_1115H (124 aa).

The region spanning 3 to 124 (ATPIGYADTR…PVLDLKPALD (122 aa)) is the TsaA-like domain. S-adenosyl-L-methionine-binding positions include 20–22 (PRQ), 58–59 (DD), R78, and 111–114 (AHGS).

This sequence belongs to the tRNA methyltransferase O family.

This Halobacterium salinarum (strain ATCC 700922 / JCM 11081 / NRC-1) (Halobacterium halobium) protein is Probable S-adenosyl-L-methionine-binding protein VNG_1115H.